Here is a 196-residue protein sequence, read N- to C-terminus: UPF0301 protein BT_1078 (196 aa).

It belongs to the UPF0301 (AlgH) family.

The polypeptide is UPF0301 protein BT_1078 (Bacteroides thetaiotaomicron (strain ATCC 29148 / DSM 2079 / JCM 5827 / CCUG 10774 / NCTC 10582 / VPI-5482 / E50)).